Reading from the N-terminus, the 195-residue chain is NADH-quinone oxidoreductase subunit B (195 aa).

4 residues coordinate [4Fe-4S] cluster: cysteine 74, cysteine 75, cysteine 139, and cysteine 169.

Belongs to the complex I 20 kDa subunit family. As to quaternary structure, NDH-1 is composed of 14 different subunits. Subunits NuoB, C, D, E, F, and G constitute the peripheral sector of the complex. [4Fe-4S] cluster serves as cofactor.

The protein localises to the cell inner membrane. The enzyme catalyses a quinone + NADH + 5 H(+)(in) = a quinol + NAD(+) + 4 H(+)(out). Functionally, NDH-1 shuttles electrons from NADH, via FMN and iron-sulfur (Fe-S) centers, to quinones in the respiratory chain. The immediate electron acceptor for the enzyme in this species is believed to be ubiquinone. Couples the redox reaction to proton translocation (for every two electrons transferred, four hydrogen ions are translocated across the cytoplasmic membrane), and thus conserves the redox energy in a proton gradient. This chain is NADH-quinone oxidoreductase subunit B, found in Methylobacterium radiotolerans (strain ATCC 27329 / DSM 1819 / JCM 2831 / NBRC 15690 / NCIMB 10815 / 0-1).